The following is a 725-amino-acid chain: Calcium-responsive transcription factor (725 aa).

The tract at residues 572–592 is disordered; sequence TSPDESPAVVSVNNQPSSSPS. Residues 577–592 are compositionally biased toward low complexity; the sequence is SPAVVSVNNQPSSSPS.

It localises to the nucleus. Functionally, acts as a transcriptional activator that mediates the calcium- and neuron-selective induction of BDNF exon III transcription. Binds to the consensus calcium-response element CaRE1 5'-CTATTTCGAG-3' sequence. This is Calcium-responsive transcription factor (CARF) from Homo sapiens (Human).